The following is a 156-amino-acid chain: Small ribosomal subunit protein uS7 (156 aa).

Belongs to the universal ribosomal protein uS7 family. Part of the 30S ribosomal subunit. Contacts proteins S9 and S11.

Its function is as follows. One of the primary rRNA binding proteins, it binds directly to 16S rRNA where it nucleates assembly of the head domain of the 30S subunit. Is located at the subunit interface close to the decoding center, probably blocks exit of the E-site tRNA. This Mycobacterium sp. (strain JLS) protein is Small ribosomal subunit protein uS7.